A 255-amino-acid polypeptide reads, in one-letter code: Protein YIPF7 (255 aa).

Residues 1-124 (MSNLGQFDSD…ADGSIMNETD (124 aa)) lie on the Cytoplasmic side of the membrane. Residues 125–145 (LTGPILFCMALGATLLLAGKV) traverse the membrane as a helical segment. Glutamine 146 is a topological domain (lumenal). A helical transmembrane segment spans residues 147–167 (FGYVYGMSAIGCLGIHALLNL). The Cytoplasmic portion of the chain corresponds to 168 to 180 (MSSSGVSYGCVAS). A helical membrane pass occupies residues 181-201 (VLGYCLLPMVILSSCAIFFSL). The Lumenal portion of the chain corresponds to 202 to 204 (QGT). Residues 205-225 (FGTVSALVIIGWCSLSASKIF) traverse the membrane as a helical segment. The Cytoplasmic portion of the chain corresponds to 226–234 (TSALAMEGQ). A helical membrane pass occupies residues 235–255 (QLLIAYPCALLYGLFALVTVF).

The protein belongs to the YIP1 family.

Its subcellular location is the endoplasmic reticulum membrane. It localises to the golgi apparatus. It is found in the cis-Golgi network membrane. The protein localises to the trans-Golgi network membrane. The protein is Protein YIPF7 (YIPF7) of Bos taurus (Bovine).